A 947-amino-acid chain; its full sequence is Zinc finger CCCH domain-containing protein 18 (947 aa).

Methionine 1 carries the N-acetylmethionine modification. 3 disordered regions span residues 1–218 (MDVA…PRPT), 275–295 (GGPV…TESA), and 387–921 (YTEA…TLSR). A phosphoserine mark is found at serine 6, serine 32, serine 44, serine 57, serine 63, serine 70, serine 74, serine 79, and serine 91. Over residues 73–85 (KSQDQDSEAHELS) the composition is skewed to basic and acidic residues. A compositionally biased stretch (acidic residues) spans 94-104 (EEGDDAEEDGT). A Phosphothreonine modification is found at threonine 104. 2 positions are modified to phosphoserine: serine 105 and serine 113. A compositionally biased stretch (basic and acidic residues) spans 105-119 (SDLRDEASSVTRELD). Acidic residues-rich tracts occupy residues 120–131 (EHELDYDEEVPE) and 138–153 (QEEE…EEEK). A compositionally biased stretch (basic and acidic residues) spans 160-185 (EEGKPDVQSVGEKEPTEAAKEKKKED). Serine 168 is subject to Phosphoserine. A compositionally biased stretch (acidic residues) spans 186–202 (DDGEIDDGEIDDDDLEE). The segment covering 203-212 (GEVKDPSDRK) has biased composition (basic and acidic residues). The segment at 214-240 (RPRPTCRFFMKGNCTWGMNCRFIHPGV) adopts a C3H1-type zinc-finger fold. Over residues 391 to 479 (EPYHNYRDRE…DRDKDKEKPK (89 aa)) the composition is skewed to basic and acidic residues. Serine 482 bears the Phosphoserine mark. Lysine 505 participates in a covalent cross-link: Glycyl lysine isopeptide (Lys-Gly) (interchain with G-Cter in SUMO2). Residues 505–515 (KRADEWKDPWR) show a composition bias toward basic and acidic residues. 3 positions are modified to phosphoserine: serine 527, serine 529, and serine 531. Positions 540-601 (SASSASASNS…SRSRSFSSSP (62 aa)) are enriched in low complexity. Residues 602–611 (SPSPTPSPHR) are compositionally biased toward pro residues. Glycyl lysine isopeptide (Lys-Gly) (interchain with G-Cter in SUMO2) cross-links involve residues lysine 617 and lysine 656. Positions 656–665 (KPGDLREARR) are enriched in basic and acidic residues. 2 stretches are compositionally biased toward low complexity: residues 687–720 (GSSY…SVHS) and 731–745 (ASPV…PTPA). The segment covering 755-769 (KKEDGVREEKRKRDP) has biased composition (basic and acidic residues). The segment covering 773 to 804 (PPKSSKAPAGGKASQQAAAPQQAAPGQPQQGS) has biased composition (low complexity). An N6-acetyllysine modification is found at lysine 809. Lysine 812 participates in a covalent cross-link: Glycyl lysine isopeptide (Lys-Gly) (interchain with G-Cter in SUMO2). Over residues 819 to 836 (AAEKGSRKRYEPSDKDRQ) the composition is skewed to basic and acidic residues. Phosphoserine occurs at positions 837, 846, 862, 887, and 890. Residues 887–918 (SPQSKSSSKVTSVPGKATDTATAGTKSGKAST) show a composition bias toward low complexity. Lysine 902 participates in a covalent cross-link: Glycyl lysine isopeptide (Lys-Gly) (interchain with G-Cter in SUMO2). A coiled-coil region spans residues 915–944 (KASTLSRREELLKQLKAVEDAIARKRAKIP).

In terms of assembly, interacts with ZFC3H1 in a RNase-insensitive manner.

The protein localises to the nucleus. This is Zinc finger CCCH domain-containing protein 18 (Zc3h18) from Rattus norvegicus (Rat).